The following is a 440-amino-acid chain: Enolase (440 aa).

Gln-163 contributes to the (2R)-2-phosphoglycerate binding site. The Proton donor role is filled by Glu-205. 3 residues coordinate Mg(2+): Asp-242, Glu-288, and Asp-315. (2R)-2-phosphoglycerate contacts are provided by Lys-340, Arg-369, Ser-370, and Lys-391. Lys-340 (proton acceptor) is an active-site residue.

Belongs to the enolase family. Requires Mg(2+) as cofactor.

It is found in the cytoplasm. The protein localises to the secreted. It localises to the cell surface. It catalyses the reaction (2R)-2-phosphoglycerate = phosphoenolpyruvate + H2O. The protein operates within carbohydrate degradation; glycolysis; pyruvate from D-glyceraldehyde 3-phosphate: step 4/5. Its function is as follows. Catalyzes the reversible conversion of 2-phosphoglycerate (2-PG) into phosphoenolpyruvate (PEP). It is essential for the degradation of carbohydrates via glycolysis. This is Enolase from Limosilactobacillus fermentum (strain NBRC 3956 / LMG 18251) (Lactobacillus fermentum).